The following is a 180-amino-acid chain: Large ribosomal subunit protein uL5 (180 aa).

Belongs to the universal ribosomal protein uL5 family. As to quaternary structure, part of the 50S ribosomal subunit; part of the 5S rRNA/L5/L18/L25 subcomplex. Contacts the 5S rRNA and the P site tRNA. Forms a bridge to the 30S subunit in the 70S ribosome.

Its function is as follows. This is one of the proteins that bind and probably mediate the attachment of the 5S RNA into the large ribosomal subunit, where it forms part of the central protuberance. In the 70S ribosome it contacts protein S13 of the 30S subunit (bridge B1b), connecting the 2 subunits; this bridge is implicated in subunit movement. Contacts the P site tRNA; the 5S rRNA and some of its associated proteins might help stabilize positioning of ribosome-bound tRNAs. The sequence is that of Large ribosomal subunit protein uL5 from Pediococcus pentosaceus (strain ATCC 25745 / CCUG 21536 / LMG 10740 / 183-1w).